A 44-amino-acid chain; its full sequence is MFELSSILIRGGGGVLIVLILLLWIVDENCTDAKAMAYNINCTV.

A helical membrane pass occupies residues 6–26; that stretch reads SILIRGGGGVLIVLILLLWIV.

The protein localises to the membrane. This is an uncharacterized protein from Ornithodoros (relapsing fever ticks).